The following is a 345-amino-acid chain: N-acetyl-gamma-glutamyl-phosphate reductase (345 aa).

Cys149 is an active-site residue.

Belongs to the NAGSA dehydrogenase family. Type 1 subfamily.

The protein localises to the cytoplasm. It carries out the reaction N-acetyl-L-glutamate 5-semialdehyde + phosphate + NADP(+) = N-acetyl-L-glutamyl 5-phosphate + NADPH + H(+). The protein operates within amino-acid biosynthesis; L-arginine biosynthesis; N(2)-acetyl-L-ornithine from L-glutamate: step 3/4. Catalyzes the NADPH-dependent reduction of N-acetyl-5-glutamyl phosphate to yield N-acetyl-L-glutamate 5-semialdehyde. The sequence is that of N-acetyl-gamma-glutamyl-phosphate reductase from Geobacillus sp. (strain WCH70).